A 149-amino-acid chain; its full sequence is Peptide deformylase (149 aa).

Fe cation contacts are provided by Cys92 and His134. Glu135 is a catalytic residue. Residue His138 participates in Fe cation binding.

The protein belongs to the polypeptide deformylase family. Fe(2+) serves as cofactor.

The enzyme catalyses N-terminal N-formyl-L-methionyl-[peptide] + H2O = N-terminal L-methionyl-[peptide] + formate. Functionally, removes the formyl group from the N-terminal Met of newly synthesized proteins. Requires at least a dipeptide for an efficient rate of reaction. N-terminal L-methionine is a prerequisite for activity but the enzyme has broad specificity at other positions. The chain is Peptide deformylase from Buchnera aphidicola subsp. Cinara cedri (strain Cc).